We begin with the raw amino-acid sequence, 149 residues long: Putative pre-16S rRNA nuclease (149 aa).

It belongs to the YqgF nuclease family.

It is found in the cytoplasm. Its function is as follows. Could be a nuclease involved in processing of the 5'-end of pre-16S rRNA. The polypeptide is Putative pre-16S rRNA nuclease (Synechococcus elongatus (strain ATCC 33912 / PCC 7942 / FACHB-805) (Anacystis nidulans R2)).